A 359-amino-acid polypeptide reads, in one-letter code: MALVPMRLLLDHAAENGYGIPAFNVNNMEQIISIMQAADETDSPVILQASRGARSYAGENFLRHLVLGAVETYPHIPIAMHQDHGNSPATCYSAIRNGFTSVMMDGSLEADAKTPASFEYNVNVTAEVVKVAHSVGASVEGELGCLGSLETGQGEAEDGHGFEGKLDHSQLLTDPEEAVEFVNKTQVDALAVAIGTSHGAYKFTRKPTGEVLAISRIEEIHRLLPNTHLVMHGSSSVPQEWIDMINEFGGAIPETYGVPVEEIQKGIKSGVRKVNIDTDNRLAITAAFREAAAKDPKNFDPRHFLKPSIKYMKQVCADRYQQFWTAGNASKIKQLTLDDYAAKYAKGELTATSRTSVAV.

Ser-50 lines the D-glyceraldehyde 3-phosphate pocket. The Proton donor role is filled by Asp-83. 4 residues coordinate Zn(2+): His-84, Asp-105, Glu-142, and His-198. Gly-199 is a binding site for dihydroxyacetone phosphate. His-232 serves as a coordination point for Zn(2+). Dihydroxyacetone phosphate contacts are provided by residues 233 to 235 and 275 to 278; these read GSS and NIDT.

This sequence belongs to the class II fructose-bisphosphate aldolase family. Zn(2+) serves as cofactor.

The enzyme catalyses beta-D-fructose 1,6-bisphosphate = D-glyceraldehyde 3-phosphate + dihydroxyacetone phosphate. The protein operates within carbohydrate degradation; glycolysis; D-glyceraldehyde 3-phosphate and glycerone phosphate from D-glucose: step 4/4. Catalyzes the aldol condensation of dihydroxyacetone phosphate (DHAP or glycerone-phosphate) with glyceraldehyde 3-phosphate (G3P) to form fructose 1,6-bisphosphate (FBP) in gluconeogenesis and the reverse reaction in glycolysis. This chain is Fructose-bisphosphate aldolase class 2 (fbaA), found in Synechocystis sp. (strain ATCC 27184 / PCC 6803 / Kazusa).